The chain runs to 119 residues: Large ribosomal subunit protein bL19 (119 aa).

The protein belongs to the bacterial ribosomal protein bL19 family.

Its function is as follows. This protein is located at the 30S-50S ribosomal subunit interface and may play a role in the structure and function of the aminoacyl-tRNA binding site. This is Large ribosomal subunit protein bL19 from Pseudoalteromonas translucida (strain TAC 125).